The following is a 153-amino-acid chain: MDEQQLQQLTEQLSLTYFKKPFRHRAYFNSRLKTTGGRYLLNSHNIELNKKYLTEHGQKELEGIIKHELCHYHLHLEGKGYKHRDKDFRTLLKEVGAPRFCTPLEKEKKPQRKVRTYKCEACGQTFLRKRKMDTSRYVCGKCGGKIKEIIKKG.

Residues 6–148 form the SprT-like domain; the sequence is LQQLTEQLSL…CGKCGGKIKE (143 aa). Histidine 67 provides a ligand contact to Zn(2+). Residue glutamate 68 is part of the active site. Histidine 71 contacts Zn(2+).

The protein belongs to the SprT family. Requires Zn(2+) as cofactor.

The protein localises to the cytoplasm. The chain is Protein SprT-like from Bacillus licheniformis (strain ATCC 14580 / DSM 13 / JCM 2505 / CCUG 7422 / NBRC 12200 / NCIMB 9375 / NCTC 10341 / NRRL NRS-1264 / Gibson 46).